Consider the following 333-residue polypeptide: MSEKHLTYADSGVDITKEEKTVKTLIEKLSYVRKGMGAPLTGIGHYAGLLDFGEYALALTTDGVGSKVLIANEMQRWNTVGIDCIAMNVNDLLAIGAEPVAFVDYLALEKHEEGFAAQIGEGLVKGAEISRMSIVGGETATLPEIIKGFDLAGTCLGIVRKDEIVEGEKVRVGDVIVGVPSTGVHSNGYTLVRKIIEESRYSYHDPCPYDNSKMIGDELLTPTRIYIEILDVLKACEVHGLAHITGSGLLKLRRVTKLGFDFYDPLEPQEIFKFLQKEGGVEDLEMYRTFNMGMGFLVILPEKDAAKAAKITGGKIVGKIVESGIRVKDLVIE.

It belongs to the AIR synthase family.

The protein resides in the cytoplasm. It catalyses the reaction 2-formamido-N(1)-(5-O-phospho-beta-D-ribosyl)acetamidine + ATP = 5-amino-1-(5-phospho-beta-D-ribosyl)imidazole + ADP + phosphate + H(+). It participates in purine metabolism; IMP biosynthesis via de novo pathway; 5-amino-1-(5-phospho-D-ribosyl)imidazole from N(2)-formyl-N(1)-(5-phospho-D-ribosyl)glycinamide: step 2/2. This is Phosphoribosylformylglycinamidine cyclo-ligase from Methanosarcina barkeri (strain Fusaro / DSM 804).